A 41-amino-acid chain; its full sequence is Augerpeptide hhe6.1 (41 aa).

3 disulfides stabilise this stretch: Cys-11–Cys-32, Cys-18–Cys-35, and Cys-31–Cys-40.

As to expression, expressed by the venom duct.

Its subcellular location is the secreted. The chain is Augerpeptide hhe6.1 from Hastula hectica (Sea snail).